The chain runs to 608 residues: Histone-arginine methyltransferase CARM1 (608 aa).

Residues 28–139 (ATVSVFPGAR…GHTLERSVFS (112 aa)) are interaction with C9orf72. The region spanning 147 to 454 (AVQYFQFYGY…KRQSYDISIV (308 aa)) is the SAM-dependent MTase PRMT-type domain. 4 residues coordinate S-adenosyl-L-methionine: glutamine 160, arginine 169, glycine 193, and glutamate 215. Serine 217 is subject to Phosphoserine. Lysine 228 participates in a covalent cross-link: Glycyl lysine isopeptide (Lys-Gly) (interchain with G-Cter in ubiquitin). 2 residues coordinate S-adenosyl-L-methionine: glutamate 244 and serine 272. The interval 347 to 380 (RILMAKSVKYTVNFLEAKEGDLHRIEIPFKFHML) is required for nuclear translocation. The transactivation domain stretch occupies residues 500-608 (TGSTYNLSSG…IPTNTMHYGS (109 aa)). Arginine 551 is modified (dimethylated arginine).

Belongs to the class I-like SAM-binding methyltransferase superfamily. Protein arginine N-methyltransferase family. Homodimer. Interacts with NR1H4. Interacts with SNRPC. Interacts with the C-terminus of NCOA2/GRIP1, NCO3/ACTR and NCOA1/SRC1. Part of a complex consisting of CARM1, EP300/P300 and NCOA2/GRIP1. Interacts with FLII, TP53, myogenic factor MEF2, EP300/P300, TRIM24, CREBBP and CTNNB1. Interacts with RELA. Identified in a complex containing CARM1, TRIM24 and NCOA2/GRIP1. Interacts with NCOA3/SRC3. Interacts with SKP2. Interacts (via PH domain-like fold) with C9orf72. Interacts with PARP1; promoting PARP1 recruimtent to replication forks. In terms of processing, phosphorylation at Ser-217 is strongly increased during mitosis, and decreases rapidly to a very low, basal level after entry into the G1 phase of the cell cycle. Phosphorylation at Ser-217 interferes with S-adenosyl-L-methionine binding and strongly reduces methyltransferase activity. Phosphorylation at Ser-217 may promote cytosolic location. Auto-methylated on Arg-551. Methylation enhances transcription coactivator activity. Methylation is required for its role in the regulation of pre-mRNA alternative splicing. Post-translationally, ubiquitinated by E3 ubiquitin-protein ligase complex containing FBXO9 at Lys-228; leading to proteasomal degradation. In terms of tissue distribution, ubiquitously expressed. Within the brain, present in proliferating cells from lateral ventricular zone and dentate gyrus (at protein level).

It is found in the nucleus. Its subcellular location is the cytoplasm. The protein resides in the chromosome. It catalyses the reaction L-arginyl-[protein] + 2 S-adenosyl-L-methionine = N(omega),N(omega)-dimethyl-L-arginyl-[protein] + 2 S-adenosyl-L-homocysteine + 2 H(+). Methylation of H3R17 (H3R17me) by CARM1 is stimulated by preacetylation of H3 'Lys-18' (H3K18ac) H3 'Lys-23' (H3K23ac) by EP300 and blocked by citrullination of H3 'Arg-17' (H3R17ci) by PADI4. Its function is as follows. Methylates (mono- and asymmetric dimethylation) the guanidino nitrogens of arginyl residues in several proteins involved in DNA packaging, transcription regulation, pre-mRNA splicing, and mRNA stability. Recruited to promoters upon gene activation together with histone acetyltransferases from EP300/P300 and p160 families, methylates histone H3 at 'Arg-17' (H3R17me), forming mainly asymmetric dimethylarginine (H3R17me2a), leading to activation of transcription via chromatin remodeling. During nuclear hormone receptor activation and TCF7L2/TCF4 activation, acts synergically with EP300/P300 and either one of the p160 histone acetyltransferases NCOA1/SRC1, NCOA2/GRIP1 and NCOA3/ACTR or CTNNB1/beta-catenin to activate transcription. During myogenic transcriptional activation, acts together with NCOA3/ACTR as a coactivator for MEF2C. During monocyte inflammatory stimulation, acts together with EP300/P300 as a coactivator for NF-kappa-B. Acts as a coactivator for PPARG, promotes adipocyte differentiation and the accumulation of brown fat tissue. Plays a role in the regulation of pre-mRNA alternative splicing by methylation of splicing factors. Also seems to be involved in p53/TP53 transcriptional activation. Methylates EP300/P300, both at 'Arg-2142', which may loosen its interaction with NCOA2/GRIP1, and at 'Arg-580' and 'Arg-604' in the KIX domain, which impairs its interaction with CREB and inhibits CREB-dependent transcriptional activation. Also methylates arginine residues in RNA-binding proteins PABPC1, ELAVL1 and ELAV4, which may affect their mRNA-stabilizing properties and the half-life of their target mRNAs. Acts as a transcriptional coactivator of ACACA/acetyl-CoA carboxylase by enriching H3R17 methylation at its promoter, thereby positively regulating fatty acid synthesis. Independently of its methyltransferase activity, involved in replication fork progression: promotes PARP1 recruitment to replication forks, leading to poly-ADP-ribosylation of chromatin at replication forks and reduced fork speed. This chain is Histone-arginine methyltransferase CARM1 (Carm1), found in Mus musculus (Mouse).